The sequence spans 205 residues: Outer-membrane lipoprotein LolB (205 aa).

Positions 1–17 (MRLRLFLAASALALLSG) are cleaved as a signal peptide. A lipid anchor (N-palmitoyl cysteine) is attached at Cys18. Residue Cys18 is the site of S-diacylglycerol cysteine attachment.

It belongs to the LolB family. Monomer.

The protein resides in the cell outer membrane. Its function is as follows. Plays a critical role in the incorporation of lipoproteins in the outer membrane after they are released by the LolA protein. The sequence is that of Outer-membrane lipoprotein LolB from Pseudomonas paraeruginosa (strain DSM 24068 / PA7) (Pseudomonas aeruginosa (strain PA7)).